Reading from the N-terminus, the 218-residue chain is Large ribosomal subunit protein uL3 (218 aa).

A disordered region spans residues 134 to 154; that stretch reads GRASHGNSRSHNVPGSIGMAQ. At Gln-154 the chain carries N5-methylglutamine.

The protein belongs to the universal ribosomal protein uL3 family. Part of the 50S ribosomal subunit. Forms a cluster with proteins L14 and L19. Post-translationally, methylated by PrmB.

Functionally, one of the primary rRNA binding proteins, it binds directly near the 3'-end of the 23S rRNA, where it nucleates assembly of the 50S subunit. The chain is Large ribosomal subunit protein uL3 from Polynucleobacter necessarius subsp. necessarius (strain STIR1).